Consider the following 572-residue polypeptide: Chaperonin CPN60-like 2, mitochondrial (572 aa).

Residues 1–31 constitute a mitochondrion transit peptide; sequence MYRVLSKLSSSIGSSTSRKLVSGRIISSRNY.

It belongs to the chaperonin (HSP60) family.

It is found in the mitochondrion. Its function is as follows. Implicated in mitochondrial protein import and macromolecular assembly. May facilitate the correct folding of imported proteins. May also prevent misfolding and promote the refolding and proper assembly of unfolded polypeptides generated under stress conditions in the mitochondrial matrix. This is Chaperonin CPN60-like 2, mitochondrial from Arabidopsis thaliana (Mouse-ear cress).